A 361-amino-acid chain; its full sequence is Alternative oxidase, mitochondrial (361 aa).

The helical transmembrane segment at 155 to 175 (LIRYVFLESVAGVPGMVAGML) threads the bilayer. Positions 162, 201, and 204 each coordinate Fe cation. A helical transmembrane segment spans residues 221 to 241 (MILGAQGVFFNSFFLCYLFSP). Fe cation contacts are provided by Glu252, Glu253, Glu309, and His312. Positions 320–361 (GNLKQDEDPNPFVSEYGKERGEKPGKGIESLKPVGWERDEVI) are disordered. Over residues 335–345 (YGKERGEKPGK) the composition is skewed to basic and acidic residues.

This sequence belongs to the alternative oxidase family. Fe cation is required as a cofactor.

The protein localises to the mitochondrion inner membrane. Functionally, catalyzes cyanide-resistant oxygen consumption. May increase respiration when the cytochrome respiratory pathway is restricted, or in response to low temperatures. The protein is Alternative oxidase, mitochondrial (aox) of Botryotinia fuckeliana (Noble rot fungus).